Consider the following 349-residue polypeptide: Inhibitor of nuclear factor kappa-B kinase-interacting protein (349 aa).

The span at 1-11 (MSEVKSRKKSG) shows a compositional bias: basic residues. The interval 1–39 (MSEVKSRKKSGTKGAPAEPGKRNEGGKSPEARGGGGRGW) is disordered. Positions 19–30 (PGKRNEGGKSPE) are enriched in basic and acidic residues. The helical transmembrane segment at 45-61 (GVSLLSLGTCLGLAWFV) threads the bilayer. N-linked (GlcNAc...) asparagine glycosylation is present at Asn-145. 2 coiled-coil regions span residues 183 to 216 (GLVT…IGDL) and 304 to 347 (IGRL…HISD). Asn-327 carries an N-linked (GlcNAc...) asparagine glycan.

In terms of processing, N-glycosylated.

The protein resides in the endoplasmic reticulum membrane. In terms of biological role, target of p53/TP53 with pro-apoptotic function. The protein is Inhibitor of nuclear factor kappa-B kinase-interacting protein (IKBIP) of Bos taurus (Bovine).